The chain runs to 278 residues: Large ribosomal subunit protein uL2 (278 aa).

2 disordered regions span residues 32–57 (ALTE…IGGG) and 221–278 (RGVA…KKKR). Over residues 269-278 (IRSRHAKKKR) the composition is skewed to basic residues.

The protein belongs to the universal ribosomal protein uL2 family. Part of the 50S ribosomal subunit. Forms a bridge to the 30S subunit in the 70S ribosome.

One of the primary rRNA binding proteins. Required for association of the 30S and 50S subunits to form the 70S ribosome, for tRNA binding and peptide bond formation. It has been suggested to have peptidyltransferase activity; this is somewhat controversial. Makes several contacts with the 16S rRNA in the 70S ribosome. This chain is Large ribosomal subunit protein uL2, found in Zymomonas mobilis subsp. mobilis (strain ATCC 31821 / ZM4 / CP4).